A 231-amino-acid polypeptide reads, in one-letter code: Flagellar L-ring protein (231 aa).

Positions 1–18 (MNRYVSVLALSGIAVLAG) are cleaved as a signal peptide. Residue C19 is the site of N-palmitoyl cysteine attachment. C19 is lipidated: S-diacylglycerol cysteine.

This sequence belongs to the FlgH family. In terms of assembly, the basal body constitutes a major portion of the flagellar organelle and consists of four rings (L,P,S, and M) mounted on a central rod.

The protein resides in the cell outer membrane. Its subcellular location is the bacterial flagellum basal body. Functionally, assembles around the rod to form the L-ring and probably protects the motor/basal body from shearing forces during rotation. The chain is Flagellar L-ring protein from Pseudomonas fluorescens (strain SBW25).